Consider the following 392-residue polypeptide: S-adenosylmethionine synthase (392 aa).

H17 serves as a coordination point for ATP. Mg(2+) is bound at residue D19. E45 serves as a coordination point for K(+). E58 and Q102 together coordinate L-methionine. Residues 102–112 (QSADIAQGVDA) are flexible loop. Residues 169–171 (DAK), 235–236 (KF), D244, 250–251 (RK), A267, and K271 each bind ATP. D244 contributes to the L-methionine binding site. K275 provides a ligand contact to L-methionine.

This sequence belongs to the AdoMet synthase family. In terms of assembly, homotetramer; dimer of dimers. The cofactor is Mg(2+). K(+) is required as a cofactor.

It localises to the cytoplasm. It carries out the reaction L-methionine + ATP + H2O = S-adenosyl-L-methionine + phosphate + diphosphate. It functions in the pathway amino-acid biosynthesis; S-adenosyl-L-methionine biosynthesis; S-adenosyl-L-methionine from L-methionine: step 1/1. Its function is as follows. Catalyzes the formation of S-adenosylmethionine (AdoMet) from methionine and ATP. The overall synthetic reaction is composed of two sequential steps, AdoMet formation and the subsequent tripolyphosphate hydrolysis which occurs prior to release of AdoMet from the enzyme. In Methylobacterium radiotolerans (strain ATCC 27329 / DSM 1819 / JCM 2831 / NBRC 15690 / NCIMB 10815 / 0-1), this protein is S-adenosylmethionine synthase.